We begin with the raw amino-acid sequence, 118 residues long: Small ribosomal subunit protein uS17 (118 aa).

The protein belongs to the universal ribosomal protein uS17 family. In terms of assembly, part of the 30S ribosomal subunit.

One of the primary rRNA binding proteins, it binds specifically to the 5'-end of 16S ribosomal RNA. This is Small ribosomal subunit protein uS17 from Methanopyrus kandleri (strain AV19 / DSM 6324 / JCM 9639 / NBRC 100938).